The primary structure comprises 231 residues: MKNAPLTLNFGSVRLPVSADGLLHAPTAQQQLGLTQSWEAALVEHGLPETYRDFGAGPEAAVSVPDFVALAFALDTPEARRWQKRARELLARAMQGDVRVAAQIAERNPEPDARRWLAARLESTGARRELLATVARHGGEGRVYGQLGSISNRTVLGKDSASVRQERGVKATRDGLTSAELLRLAYIDTVTARAIQESEARGNAAILTLHEQVARSERQSWERAGQVQRVG.

As to quaternary structure, homodimer.

It is found in the cytoplasm. The protein resides in the nucleoid. Appears to contribute to D.radiodurans capacity to survive exposure to ionizing radiation. Likely functions as a DNA damage-induced nucleoid-associated protein (NAP) that contributes to the enhanced level of nucleoid compaction after irradiation by bridging DNA duplexes, thereby limiting the dispersion of the fragmented genome immediately after irradiation to facilitate subsequent DNA repair. In vitro, binds both ssDNA and dsDNA, and is able to compact circular DNA, circularize linear DNA, anneal complementary DNA strands and protect DNA from nucleases. The sequence is that of DNA damage response protein C from Deinococcus radiodurans (strain ATCC 13939 / DSM 20539 / JCM 16871 / CCUG 27074 / LMG 4051 / NBRC 15346 / NCIMB 9279 / VKM B-1422 / R1).